Consider the following 46-residue polypeptide: uncharacterized protein (46 aa).

This is an uncharacterized protein from Saccharomyces cerevisiae (strain ATCC 204508 / S288c) (Baker's yeast).